A 1036-amino-acid chain; its full sequence is MEAQVENAIQIAFDPTSSQQLRGQAVEFLERLRSEGSAWQASLALFTRDPRPSDIIRHTSLDLVNNAVQEHRLDEQSLAYIKDTLMSHVRQSYAPGSSTADTSHIQNKLMQTMTYLFAALYPTSWRSFFDDFRALAGDQATIGNVNTATTFLYLRMLVQVHDEIADQLVARSKEETDRNTHLKDLIRDNDIQKIALSWQEILAKWRETDLSLVEMCLRTIGRYVSWIRLELVINQDMITTFLEMAGQQGISDPESPAGKVRDAAIDTFSEIVGKKMEPSNKIELILFLNLPDVVGQLITSPALAEFNSPNYDNDLAETVAKLVNNIVFDVVKILENDNVDEQTRQRADDLIRIFTPYLLRFFADQYDEVCSTVIPSLTDLLTFLRKLQKKQGTVPPQYAAVLPPVLDAIIAKMKYDETADWGEEGEQTDEAEFQDLRRRLHVLQQTITTIDESYYIETLSRLVNGTFSGLSQGDQSLNWRDLELALYEMYLFGELAIRNQGLFAKREPSSVAAQHLVGMMNSMIDSGLANYPHPAVQLQYMEICVRYYQFFEQNPHLIPKVLENFVQLTHSSHVKVRSRSWYLFQRLVKHLRAQLGNVSYDIIQAVADLLTIKAELPDTSEDEMSSDEEDQSADALFNSQLYLFEAVGCIASSNTVSAENKKLYAQTIMSPLFVDLEQTLPQARNGDDRATLQIHHIIMALGTLARGYSDWVPSNNSSAVPHSDVADEFVKASEAILVALESLNSSSSIRHAARFAFSRMIAVLGSRLLQQLPSWIEGLLSLSSSMDEISTFLKVLGQVVFTFKSEISNILDTVMTPVLQRIFSALATTPSGTDDEIQLAELRREYLNFLIVVLNQGLGSVLVSNTNQSSFETIISSIENFARDTHDAPTARLAIFVLIRMINVWCGPDKVGPGANQTPTSPATTQAPLPGFENYVVERFSPLAWSIPASPGFNSKDAQAKQVLVEAANLQTEIVKKVGEPYVERLKSDLSGNGVAADGVDQYVRTLAGALEGTKKEKEWRNFFVQFVDRMLSGRG.

This sequence belongs to the exportin family.

It localises to the nucleus. It is found in the cytoplasm. In terms of biological role, tRNA nucleus export receptor which facilitates tRNA translocation across the nuclear pore complex. Involved in pre-tRNA splicing, probably by affecting the interaction of pre-tRNA with splicing endonuclease. This Phaeosphaeria nodorum (strain SN15 / ATCC MYA-4574 / FGSC 10173) (Glume blotch fungus) protein is Exportin-T (LOS1).